The following is a 210-amino-acid chain: Glycerol-3-phosphate acyltransferase 2 (210 aa).

The next 6 membrane-spanning stretches (helical) occupy residues Leu4–Tyr24, Val52–Met72, Ala73–Ile93, Ile114–Ile134, Phe141–Gln161, and Asp163–Pro183.

This sequence belongs to the PlsY family. As to quaternary structure, probably interacts with PlsX.

The protein resides in the cell membrane. It catalyses the reaction an acyl phosphate + sn-glycerol 3-phosphate = a 1-acyl-sn-glycero-3-phosphate + phosphate. The protein operates within lipid metabolism; phospholipid metabolism. Its function is as follows. Catalyzes the transfer of an acyl group from acyl-phosphate (acyl-PO(4)) to glycerol-3-phosphate (G3P) to form lysophosphatidic acid (LPA). This enzyme utilizes acyl-phosphate as fatty acyl donor, but not acyl-CoA or acyl-ACP. This is Glycerol-3-phosphate acyltransferase 2 from Dehalococcoides mccartyi (strain CBDB1).